Reading from the N-terminus, the 876-residue chain is Valine--tRNA ligase (876 aa).

The 'HIGH' region motif lies at 44 to 54 (PNVTGKLHLGH). The 'KMSKS' region motif lies at 520–524 (KMSKS). Residue lysine 523 coordinates ATP. Positions 805–876 (LEGLIDMDKE…VKARIEQLKA (72 aa)) form a coiled coil.

The protein belongs to the class-I aminoacyl-tRNA synthetase family. ValS type 1 subfamily. As to quaternary structure, monomer.

Its subcellular location is the cytoplasm. The enzyme catalyses tRNA(Val) + L-valine + ATP = L-valyl-tRNA(Val) + AMP + diphosphate. Its function is as follows. Catalyzes the attachment of valine to tRNA(Val). As ValRS can inadvertently accommodate and process structurally similar amino acids such as threonine, to avoid such errors, it has a 'posttransfer' editing activity that hydrolyzes mischarged Thr-tRNA(Val) in a tRNA-dependent manner. The polypeptide is Valine--tRNA ligase (Staphylococcus carnosus (strain TM300)).